Here is a 314-residue protein sequence, read N- to C-terminus: 1-aminocyclopropane-1-carboxylate oxidase 1 (314 aa).

The Fe2OG dioxygenase domain occupies 153–253 (PNFGTKVSNY…RMSIASFYNP (101 aa)). Residues His177, Asp179, and His234 each coordinate Fe cation.

The protein belongs to the iron/ascorbate-dependent oxidoreductase family. Monomer. Fe cation is required as a cofactor.

The catalysed reaction is 1-aminocyclopropane-1-carboxylate + L-ascorbate + O2 = ethene + L-dehydroascorbate + hydrogen cyanide + CO2 + 2 H2O. It participates in alkene biosynthesis; ethylene biosynthesis via S-adenosyl-L-methionine; ethylene from S-adenosyl-L-methionine: step 2/2. In Malus domestica (Apple), this protein is 1-aminocyclopropane-1-carboxylate oxidase 1.